Consider the following 597-residue polypeptide: Arginine--tRNA ligase (597 aa).

Residues 138–148 (ANPTGPMHVGH) carry the 'HIGH' region motif.

It belongs to the class-I aminoacyl-tRNA synthetase family. Monomer.

The protein resides in the cytoplasm. It catalyses the reaction tRNA(Arg) + L-arginine + ATP = L-arginyl-tRNA(Arg) + AMP + diphosphate. In Rhodopseudomonas palustris (strain ATCC BAA-98 / CGA009), this protein is Arginine--tRNA ligase.